A 59-amino-acid polypeptide reads, in one-letter code: Large ribosomal subunit protein uL30 (59 aa).

This sequence belongs to the universal ribosomal protein uL30 family. Part of the 50S ribosomal subunit.

In Bacillus licheniformis (strain ATCC 14580 / DSM 13 / JCM 2505 / CCUG 7422 / NBRC 12200 / NCIMB 9375 / NCTC 10341 / NRRL NRS-1264 / Gibson 46), this protein is Large ribosomal subunit protein uL30.